A 133-amino-acid polypeptide reads, in one-letter code: Cytochrome c-554 (133 aa).

At Gln1 the chain carries Pyrrolidone carboxylic acid. Positions 17, 122, 125, and 126 each coordinate heme c.

In terms of processing, binds 1 heme c group covalently per subunit.

The protein resides in the periplasm. Its function is as follows. Monoheme c-type cytochrome, that is particularly expressed when cells generate energy via aerobic respiration. The sequence is that of Cytochrome c-554 (cycF) from Cereibacter sphaeroides (Rhodobacter sphaeroides).